A 129-amino-acid polypeptide reads, in one-letter code: uncharacterized protein (129 aa).

The span at 86 to 96 shows a compositional bias: acidic residues; that stretch reads NDGFSSDDEPE. A disordered region spans residues 86-116; that stretch reads NDGFSSDDEPEEHVILTEDNQGEPSETPQAT. Positions 103–116 are enriched in polar residues; that stretch reads EDNQGEPSETPQAT.

The protein belongs to the asfivirus D129L family.

This is an uncharacterized protein from African swine fever virus (strain Badajoz 1971 Vero-adapted) (Ba71V).